The chain runs to 347 residues: Phenylalanine--tRNA ligase alpha subunit (347 aa).

E259 contributes to the Mg(2+) binding site.

The protein belongs to the class-II aminoacyl-tRNA synthetase family. Phe-tRNA synthetase alpha subunit type 1 subfamily. Tetramer of two alpha and two beta subunits. Mg(2+) is required as a cofactor.

It is found in the cytoplasm. It carries out the reaction tRNA(Phe) + L-phenylalanine + ATP = L-phenylalanyl-tRNA(Phe) + AMP + diphosphate + H(+). This Oenococcus oeni (strain ATCC BAA-331 / PSU-1) protein is Phenylalanine--tRNA ligase alpha subunit.